The primary structure comprises 708 residues: Fatty acid oxidation complex subunit alpha (708 aa).

Residues 1–190 form an enoyl-CoA hydratase region; the sequence is MDMEKTFNLT…KMGLVDDAVP (190 aa). Residues 310-708 are 3-hydroxyacyl-CoA dehydrogenase; it reads QKVNKVMVLG…MAEEGTRFFS (399 aa).

In the N-terminal section; belongs to the enoyl-CoA hydratase/isomerase family. The protein in the central section; belongs to the 3-hydroxyacyl-CoA dehydrogenase family. In terms of assembly, heterotetramer of two alpha chains (FadJ) and two beta chains (FadI).

Its subcellular location is the cytoplasm. It carries out the reaction a (3S)-3-hydroxyacyl-CoA = a (2E)-enoyl-CoA + H2O. It catalyses the reaction a 4-saturated-(3S)-3-hydroxyacyl-CoA = a (3E)-enoyl-CoA + H2O. The catalysed reaction is a (3S)-3-hydroxyacyl-CoA + NAD(+) = a 3-oxoacyl-CoA + NADH + H(+). The enzyme catalyses (3S)-3-hydroxybutanoyl-CoA = (3R)-3-hydroxybutanoyl-CoA. The protein operates within lipid metabolism; fatty acid beta-oxidation. Its function is as follows. Catalyzes the formation of a hydroxyacyl-CoA by addition of water on enoyl-CoA. Also exhibits 3-hydroxyacyl-CoA epimerase and 3-hydroxyacyl-CoA dehydrogenase activities. The chain is Fatty acid oxidation complex subunit alpha from Shewanella halifaxensis (strain HAW-EB4).